Reading from the N-terminus, the 186-residue chain is MTVADTKKSVEQKMQKSIEAFKADLAKVRTGRAHTGLLDHVQVDYYGSMVPISQVAAVSLADARTISVQPWEKKMVQAVEKAIRDGDLGLNPATMGDVIRVPMPPLTEERRRELTKVVKGEAEGAKVAVRNLRRDANEQFKKLVKDKAISEDDERRGQDEVQKLTDKFVAEIDKLVAEKEKEIMTV.

Belongs to the RRF family.

The protein localises to the cytoplasm. Functionally, responsible for the release of ribosomes from messenger RNA at the termination of protein biosynthesis. May increase the efficiency of translation by recycling ribosomes from one round of translation to another. The chain is Ribosome-recycling factor from Cupriavidus metallidurans (strain ATCC 43123 / DSM 2839 / NBRC 102507 / CH34) (Ralstonia metallidurans).